The primary structure comprises 423 residues: COP9 signalosome complex subunit 3 (423 aa).

Ala2 is modified (N-acetylalanine). Residues 197-365 (NFERALYFYE…GMVSFHDNPE (169 aa)) enclose the PCI domain. The interval 402–423 (QFVQKSMGSQEDDSGNKPSSYS) is disordered. Residues Ser407, Ser410, and Ser423 each carry the phosphoserine modification.

Belongs to the CSN3 family. Component of the CSN complex, composed of COPS1/GPS1, COPS2, COPS3, COPS4, COPS5, COPS6, COPS7 (COPS7A or COPS7B), COPS8 and COPS9 isoform 1. In the complex, it probably interacts directly with COPS1, COPS4, COPS8 and COPS9 isoform 1. Interacts with CK2 and PKD. Interacts with the translation initiation factor EIF3S6 and IKBKG. Interacts with ERCC6. As to expression, widely expressed. Expressed at high level in heart and skeletal muscle.

Its subcellular location is the cytoplasm. The protein localises to the nucleus. Component of the COP9 signalosome complex (CSN), a complex involved in various cellular and developmental processes. The CSN complex is an essential regulator of the ubiquitin (Ubl) conjugation pathway by mediating the deneddylation of the cullin subunits of SCF-type E3 ligase complexes, leading to decrease the Ubl ligase activity of SCF-type complexes such as SCF, CSA or DDB2. The complex is also involved in phosphorylation of p53/TP53, c-jun/JUN, IkappaBalpha/NFKBIA, ITPK1 and IRF8/ICSBP, possibly via its association with CK2 and PKD kinases. CSN-dependent phosphorylation of TP53 and JUN promotes and protects degradation by the Ubl system, respectively. The protein is COP9 signalosome complex subunit 3 (COPS3) of Homo sapiens (Human).